We begin with the raw amino-acid sequence, 340 residues long: uncharacterized protein (340 aa).

The RING-CH-type zinc-finger motif lies at K6–A70. Positions 14, 17, 37, 39, 44, 47, 60, and 63 each coordinate Zn(2+). The next 3 helical transmembrane spans lie at E249 to L269, P274 to T294, and I300 to W320.

It localises to the membrane. This is an uncharacterized protein from Schizosaccharomyces pombe (strain 972 / ATCC 24843) (Fission yeast).